The sequence spans 153 residues: Ribosomal RNA large subunit methyltransferase H (153 aa).

S-adenosyl-L-methionine contacts are provided by residues Leu70, Gly102, and 121–126 (LSRMTF).

The protein belongs to the RNA methyltransferase RlmH family. Homodimer.

The protein resides in the cytoplasm. It catalyses the reaction pseudouridine(1915) in 23S rRNA + S-adenosyl-L-methionine = N(3)-methylpseudouridine(1915) in 23S rRNA + S-adenosyl-L-homocysteine + H(+). Specifically methylates the pseudouridine at position 1915 (m3Psi1915) in 23S rRNA. The protein is Ribosomal RNA large subunit methyltransferase H of Geotalea uraniireducens (strain Rf4) (Geobacter uraniireducens).